Reading from the N-terminus, the 439-residue chain is Ribosomal protein uS12 methylthiotransferase RimO (439 aa).

In terms of domain architecture, MTTase N-terminal spans 5 to 116 (PTIAISHLGC…IVNVIERVEL (112 aa)). Cys-14, Cys-50, Cys-79, Cys-154, Cys-158, and Cys-161 together coordinate [4Fe-4S] cluster. The region spanning 140-369 (TTTEGVAYLR…MELQQPISQK (230 aa)) is the Radical SAM core domain. The TRAM domain occupies 372–438 (QQEVGKIVDV…TYDLYGQVVN (67 aa)).

Belongs to the methylthiotransferase family. RimO subfamily. [4Fe-4S] cluster serves as cofactor.

It is found in the cytoplasm. The enzyme catalyses L-aspartate(89)-[ribosomal protein uS12]-hydrogen + (sulfur carrier)-SH + AH2 + 2 S-adenosyl-L-methionine = 3-methylsulfanyl-L-aspartate(89)-[ribosomal protein uS12]-hydrogen + (sulfur carrier)-H + 5'-deoxyadenosine + L-methionine + A + S-adenosyl-L-homocysteine + 2 H(+). Functionally, catalyzes the methylthiolation of an aspartic acid residue of ribosomal protein uS12. This Nostoc punctiforme (strain ATCC 29133 / PCC 73102) protein is Ribosomal protein uS12 methylthiotransferase RimO.